The following is a 55-amino-acid chain: Large ribosomal subunit protein bL33 (55 aa).

Belongs to the bacterial ribosomal protein bL33 family.

In Caulobacter vibrioides (strain ATCC 19089 / CIP 103742 / CB 15) (Caulobacter crescentus), this protein is Large ribosomal subunit protein bL33.